The chain runs to 748 residues: Polyribonucleotide nucleotidyltransferase (748 aa).

2 residues coordinate Mg(2+): aspartate 487 and aspartate 493. The region spanning proline 554–isoleucine 613 is the KH domain. The S1 motif domain occupies glycine 623–lysine 691. Positions lysine 695–asparagine 733 are disordered. Positions serine 699–lysine 712 are enriched in polar residues. A compositionally biased stretch (basic and acidic residues) spans aspartate 713–aspartate 722.

Belongs to the polyribonucleotide nucleotidyltransferase family. The cofactor is Mg(2+).

Its subcellular location is the cytoplasm. It carries out the reaction RNA(n+1) + phosphate = RNA(n) + a ribonucleoside 5'-diphosphate. In terms of biological role, involved in mRNA degradation. Catalyzes the phosphorolysis of single-stranded polyribonucleotides processively in the 3'- to 5'-direction. This chain is Polyribonucleotide nucleotidyltransferase, found in Rickettsia rickettsii (strain Iowa).